A 393-amino-acid chain; its full sequence is Metal tolerance protein A2 (393 aa).

Topologically, residues 1 to 72 (MVTPKLHLDL…EAQERAASMR (72 aa)) are cytoplasmic. Residues 73 to 93 (KLLIAVLLCAIFIVVEVVGGI) form a helical membrane-spanning segment. The Vacuolar segment spans residues 94–105 (KANSLAILTDAA). A helical transmembrane segment spans residues 106–126 (HLLSDVAAFAISLFSLWASGW). The Cytoplasmic segment spans residues 127-138 (KANPQQSYGFFR). A helical transmembrane segment spans residues 139–159 (IEILGALVSIQMIWLLAGILV). At 160–176 (YEAIVRLNNGSGEVEGS) the chain is on the vacuolar side. The helical transmembrane segment at 177–197 (LMFAVSAVGLLVNIAMAILLG) threads the bilayer. Residues 198–233 (HDHGHGHGHSHDNGHGHSHDHGHGIAATEHHHDSGH) form a required for zinc-binding region. Residues 198–257 (HDHGHGHGHSHDNGHGHSHDHGHGIAATEHHHDSGHDESQLSDVLIEQKKQRNVNIQGAY) lie on the Cytoplasmic side of the membrane. A compositionally biased stretch (basic and acidic residues) spans 202 to 236 (HGHGHSHDNGHGHSHDHGHGIAATEHHHDSGHDES). The segment at 202–237 (HGHGHSHDNGHGHSHDHGHGIAATEHHHDSGHDESQ) is disordered. The chain crosses the membrane as a helical span at residues 258-278 (LHVLGDSIQSVGVMIGGAIIW). Residues 279–284 (YKPEWK) are Vacuolar-facing. A helical transmembrane segment spans residues 285-305 (ILDLICTLVFSVIVLGTTIGM). Over 306–393 (LRNILEVLME…SHVTIQIERQ (88 aa)) the chain is Cytoplasmic.

This sequence belongs to the cation diffusion facilitator (CDF) transporter (TC 2.A.4) family. SLC30A subfamily.

The protein localises to the membrane. In terms of biological role, involved in sequestration of excess zinc in the cytoplasm into vacuoles to maintain zinc homeostasis. This Arabidopsis thaliana (Mouse-ear cress) protein is Metal tolerance protein A2 (MTPA2).